The following is a 42-amino-acid chain: Histone H1B (42 aa).

Positions 1–42 (TYYELIKAAILALKERNGSSAQAIKKYILENNKIEFQQTFLR) constitute an H15 domain.

The protein belongs to the histone H1/H5 family.

It localises to the nucleus. The protein resides in the chromosome. Its function is as follows. Histones H1 are necessary for the condensation of nucleosome chains into higher-order structures. This is Histone H1B from Olisthodiscus luteus (Marine phytoflagellate).